Here is a 593-residue protein sequence, read N- to C-terminus: Trehalose synthase/amylase TreS (593 aa).

Asp90 provides a ligand contact to substrate. Asn132 is a Ca(2+) binding site. 2 residues coordinate substrate: His133 and Gln198. Asp200 lines the Ca(2+) pocket. Arg228 lines the substrate pocket. Catalysis depends on Asp230, which acts as the Nucleophile. Tyr234, Leu235, and Glu237 together coordinate Ca(2+). The Proton donor role is filled by Glu272. The substrate site is built by His341 and Asp342.

It belongs to the glycosyl hydrolase 13 family. TreS subfamily. In terms of assembly, homohexamer.

The catalysed reaction is D-maltose = alpha,alpha-trehalose. It carries out the reaction Endohydrolysis of (1-&gt;4)-alpha-D-glucosidic linkages in polysaccharides containing three or more (1-&gt;4)-alpha-linked D-glucose units.. It functions in the pathway glycan biosynthesis; glycogen biosynthesis. The amylase activity is stimulated by addition of Ca(2+), but this cation and other divalent cations inhibit the trehalose synthase activity. In addition, trehalose synthase activity, but not amylase activity, is strongly inhibited, and in a competitive manner, by validoxylamine. On the other hand, amylase, but not trehalose synthase activity, is inhibited by the known transition-state amylase inhibitor, acarbose, suggesting the possibility of two different active sites. Other metal ions such as Mg(2+), Mn(2+), and Co(2+) are also somewhat effective in the stimulation of amylase activity, but Hg(2+), Cu(2+), Ni(2+) and Zn(2+) are inhibitory. Functionally, catalyzes the reversible interconversion of maltose and trehalose by transglucosylation. Maltose is the preferred substrate. To a lesser extent, also displays amylase activity, catalyzing the endohydrolysis of (1-&gt;4)-alpha-D-glucosidic linkages in glycogen and maltooligosaccharides such as maltoheptaose, to produce maltose which then can be converted to trehalose. TreS plays a key role in the utilization of trehalose for the production of glycogen and alpha-glucan via the TreS-Pep2 branch involved in the biosynthesis of maltose-1-phosphate (M1P). Might also function as a sensor and/or regulator of trehalose levels within the cell. Thus, when trehalose levels in the cell become dangerously low, TreS can expedite the conversion of glycogen to maltose via its amylase activity and then convert the maltose to trehalose; but this enzyme also can expedite or promote the conversion of trehalose to glycogen when cytoplasmic trehalose levels become too high. Is also able to catalyze the hydrolytic cleavage of alpha-aryl glucosides, as well as alpha-glucosyl fluoride in vitro. The polypeptide is Trehalose synthase/amylase TreS (Mycolicibacterium smegmatis (strain ATCC 700084 / mc(2)155) (Mycobacterium smegmatis)).